The following is a 600-amino-acid chain: Mediator of RNA polymerase II transcription subunit 26 (600 aa).

The 78-residue stretch at Gln10–Ala87 folds into the TFIIS N-terminal domain. Disordered stretches follow at residues Gly99–Glu330, His348–Tyr402, and Thr431–Lys461. The span at Ser123–Leu133 shows a compositional bias: basic and acidic residues. The segment covering Pro175–Asp197 has biased composition (polar residues). Over residues Ser207–Ser218 the composition is skewed to basic and acidic residues. Residues Ser314–Pro324 are compositionally biased toward pro residues. Residues Glu441 to Lys461 are compositionally biased toward basic and acidic residues. A phosphoserine mark is found at Ser447, Ser470, and Ser535.

This sequence belongs to the Mediator complex subunit 26 family. As to quaternary structure, component of the Mediator complex, which is composed of MED1, MED4, MED6, MED7, MED8, MED9, MED10, MED11, MED12, MED13, MED13L, MED14, MED15, MED16, MED17, MED18, MED19, MED20, MED21, MED22, MED23, MED24, MED25, MED26, MED27, MED29, MED30, MED31, CCNC, CDK8 and CDC2L6/CDK11. The MED12, MED13, CCNC and CDK8 subunits form a distinct module termed the CDK8 module. Mediator containing the CDK8 module is less active than Mediator lacking this module in supporting transcriptional activation. Individual preparations of the Mediator complex lacking one or more distinct subunits have been variously termed ARC, CRSP, DRIP, PC2, SMCC and TRAP. Interacts with CEBPB (when not methylated).

It localises to the nucleus. Functionally, component of the Mediator complex, a coactivator involved in the regulated transcription of nearly all RNA polymerase II-dependent genes. Mediator functions as a bridge to convey information from gene-specific regulatory proteins to the basal RNA polymerase II transcription machinery. Mediator is recruited to promoters by direct interactions with regulatory proteins and serves as a scaffold for the assembly of a functional pre-initiation complex with RNA polymerase II and the general transcription factors. The protein is Mediator of RNA polymerase II transcription subunit 26 (MED26) of Homo sapiens (Human).